We begin with the raw amino-acid sequence, 277 residues long: Putative phosphoenolpyruvate synthase regulatory protein (277 aa).

157 to 164 (GVSRCGKT) contacts ADP.

The protein belongs to the pyruvate, phosphate/water dikinase regulatory protein family. PSRP subfamily.

The enzyme catalyses [pyruvate, water dikinase] + ADP = [pyruvate, water dikinase]-phosphate + AMP + H(+). It catalyses the reaction [pyruvate, water dikinase]-phosphate + phosphate + H(+) = [pyruvate, water dikinase] + diphosphate. Functionally, bifunctional serine/threonine kinase and phosphorylase involved in the regulation of the phosphoenolpyruvate synthase (PEPS) by catalyzing its phosphorylation/dephosphorylation. This Klebsiella pneumoniae subsp. pneumoniae (strain ATCC 700721 / MGH 78578) protein is Putative phosphoenolpyruvate synthase regulatory protein.